The sequence spans 362 residues: Porin Omp2b (362 aa).

Residues 1 to 22 (MNIKSLLLGSAAALVAASGAQA) form the signal peptide.

This sequence belongs to the alphaproteobacteria porin family. As to quaternary structure, homotrimer.

It is found in the cell outer membrane. Functionally, forms passive diffusion pores that allow small molecular weight hydrophilic materials across the outer membrane. The sequence is that of Porin Omp2b (omp2b) from Brucella abortus (strain S19).